A 394-amino-acid chain; its full sequence is 1-deoxy-D-xylulose 5-phosphate reductoisomerase (394 aa).

Positions 14, 15, 16, 17, 40, 43, and 130 each coordinate NADPH. Lys131 lines the 1-deoxy-D-xylulose 5-phosphate pocket. Glu132 serves as a coordination point for NADPH. Residue Asp154 participates in Mn(2+) binding. The 1-deoxy-D-xylulose 5-phosphate site is built by Ser155, Glu156, Ser180, and His203. Residue Glu156 coordinates Mn(2+). Gly209 lines the NADPH pocket. 1-deoxy-D-xylulose 5-phosphate contacts are provided by Ser216, Asn221, Lys222, and Glu225. Glu225 contacts Mn(2+).

The protein belongs to the DXR family. It depends on Mg(2+) as a cofactor. Requires Mn(2+) as cofactor.

The enzyme catalyses 2-C-methyl-D-erythritol 4-phosphate + NADP(+) = 1-deoxy-D-xylulose 5-phosphate + NADPH + H(+). It participates in isoprenoid biosynthesis; isopentenyl diphosphate biosynthesis via DXP pathway; isopentenyl diphosphate from 1-deoxy-D-xylulose 5-phosphate: step 1/6. Functionally, catalyzes the NADPH-dependent rearrangement and reduction of 1-deoxy-D-xylulose-5-phosphate (DXP) to 2-C-methyl-D-erythritol 4-phosphate (MEP). In Corynebacterium efficiens (strain DSM 44549 / YS-314 / AJ 12310 / JCM 11189 / NBRC 100395), this protein is 1-deoxy-D-xylulose 5-phosphate reductoisomerase.